An 876-amino-acid polypeptide reads, in one-letter code: Valine--tRNA ligase (876 aa).

The 'HIGH' region motif lies at 43-53 (PNVTGVLHMGH). A 'KMSKS' region motif is present at residues 534–538 (KMSKS). Lysine 537 is an ATP binding site. The stretch at 847–876 (PEKVVAIEKAKKADAEAKIEALKASLKSLS) forms a coiled coil.

This sequence belongs to the class-I aminoacyl-tRNA synthetase family. ValS type 1 subfamily. As to quaternary structure, monomer.

The protein resides in the cytoplasm. It carries out the reaction tRNA(Val) + L-valine + ATP = L-valyl-tRNA(Val) + AMP + diphosphate. Functionally, catalyzes the attachment of valine to tRNA(Val). As ValRS can inadvertently accommodate and process structurally similar amino acids such as threonine, to avoid such errors, it has a 'posttransfer' editing activity that hydrolyzes mischarged Thr-tRNA(Val) in a tRNA-dependent manner. The protein is Valine--tRNA ligase of Christiangramia forsetii (strain DSM 17595 / CGMCC 1.15422 / KT0803) (Gramella forsetii).